Reading from the N-terminus, the 201-residue chain is UPF0301 protein ROP_34500 (201 aa).

It belongs to the UPF0301 (AlgH) family.

In Rhodococcus opacus (strain B4), this protein is UPF0301 protein ROP_34500.